A 171-amino-acid polypeptide reads, in one-letter code: MTLLSSTELRKLIQATPSLLENAIDIETQIQPNGLELTLKEVKTIDGSGAVDFDNSERQLPDGKTLEFGNDGWIHLPKGIYKVLFNEIVNIPMNLAAIAKPRSTLIRCGTTLETAVWDAGYRGRSESMLVVYNTEGFRLKKDARIMQLLFYTLGAEVEKGYSGIYQNENTK.

It belongs to the dCTP deaminase family. Archaeal dUTPase subfamily.

It carries out the reaction dUTP + H2O = dUMP + diphosphate + H(+). Its pathway is pyrimidine metabolism; dUMP biosynthesis; dUMP from dCTP (dUTP route): step 2/2. This enzyme is involved in nucleotide metabolism: it produces dUMP, the immediate precursor of thymidine nucleotides and it decreases the intracellular concentration of dUTP so that uracil cannot be incorporated into DNA. This chain is Probable deoxyuridine 5'-triphosphate nucleotidohydrolase, found in Methanosarcina barkeri (strain Fusaro / DSM 804).